A 358-amino-acid polypeptide reads, in one-letter code: Homer protein homolog 3 (358 aa).

Residues 1 to 80 (MSTAREQPIF…TKTSQKFGQW (80 aa)) form a required for interaction with NFATC2 region. A WH1 domain is found at 1–113 (MSTAREQPIF…EKFQEVKEAA (113 aa)). Positions 95 to 122 (SEQQLTQFAEKFQEVKEAARLAREKSQD) form a coiled coil. Residues S120 and S158 each carry the phosphoserine modification. Disordered regions lie at residues 137 to 168 (QVPP…TERE) and 239 to 296 (AEPV…QVQD). Residues 190–355 (ALQDSNQRLA…LREGLARLAE (166 aa)) adopt a coiled-coil conformation. Basic and acidic residues predominate over residues 257-267 (LEARVQTKDQE). Residues 268–277 (IQTLKNQSTG) are compositionally biased toward polar residues. Residues 280 to 290 (EAPDTAEREET) show a composition bias toward basic and acidic residues.

This sequence belongs to the Homer family. Tetramer. Encodes coiled-coil structures that mediate homo- and heteromultimerization. Interacts with NFATC2; interaction is calcium independent; interaction competes with PPP3CA for NFATC2 binding; interaction is reduced by AKT activation. Interacts with NFATC1 and NFATC4. Interacts with SHANK1; forms a high-order complex at least composed of SHANK1 and HOMER3; the complex formation is regulated by CAMK2A-mediated phosphorylation.

The protein localises to the cytoplasm. Its subcellular location is the postsynaptic density. It is found in the synapse. In terms of biological role, postsynaptic density scaffolding protein. Binds and cross-links cytoplasmic regions of GRM1, GRM5, ITPR1, DNM3, RYR1, RYR2, SHANK1 and SHANK3. By physically linking GRM1 and GRM5 with ER-associated ITPR1 receptors, it aids the coupling of surface receptors to intracellular calcium release. Negatively regulates T cell activation by inhibiting the calcineurin-NFAT pathway. Acts by competing with calcineurin/PPP3CA for NFAT protein binding, hence preventing NFAT activation by PPP3CA. The polypeptide is Homer protein homolog 3 (Rattus norvegicus (Rat)).